Consider the following 64-residue polypeptide: Prokaryotic ubiquitin-like protein Pup (64 aa).

The disordered stretch occupies residues 1–37 (MAQEQTQRAGGGEDDETTGGDGSAGQERREKLAAETD). Positions 21-58 (DGSAGQERREKLAAETDDLLDEIDDVLEENAEDFVRAY) are ARC ATPase binding. Residues 24–52 (AGQERREKLAAETDDLLDEIDDVLEENAE) adopt a coiled-coil conformation. Gln64 is modified (deamidated glutamine). Gln64 is covalently cross-linked (Isoglutamyl lysine isopeptide (Gln-Lys) (interchain with K-? in acceptor proteins)).

The protein belongs to the prokaryotic ubiquitin-like protein family. In terms of assembly, strongly interacts with the proteasome-associated ATPase ARC through a hydrophobic interface; the interacting region of Pup lies in its C-terminal half. There is one Pup binding site per ARC hexamer ring. Is modified by deamidation of its C-terminal glutamine to glutamate by the deamidase Dop, a prerequisite to the subsequent pupylation process.

It participates in protein degradation; proteasomal Pup-dependent pathway. Its function is as follows. Protein modifier that is covalently attached to lysine residues of substrate proteins, thereby targeting them for proteasomal degradation. The tagging system is termed pupylation. This Rhodococcus erythropolis (strain PR4 / NBRC 100887) protein is Prokaryotic ubiquitin-like protein Pup.